Reading from the N-terminus, the 86-residue chain is Small ribosomal subunit protein bS20 (86 aa).

The interval 1-25 (MANIKSAIKRAKTSEKRRVANSQEK) is disordered.

It belongs to the bacterial ribosomal protein bS20 family.

In terms of biological role, binds directly to 16S ribosomal RNA. The polypeptide is Small ribosomal subunit protein bS20 (Exiguobacterium sp. (strain ATCC BAA-1283 / AT1b)).